Here is a 144-residue protein sequence, read N- to C-terminus: Bacilliredoxin BCE_2233 (144 aa).

It belongs to the bacilliredoxin family.

The chain is Bacilliredoxin BCE_2233 from Bacillus cereus (strain ATCC 10987 / NRS 248).